The sequence spans 122 residues: Large ribosomal subunit protein uL14 (122 aa).

It belongs to the universal ribosomal protein uL14 family. Part of the 50S ribosomal subunit. Forms a cluster with proteins L3 and L19. In the 70S ribosome, L14 and L19 interact and together make contacts with the 16S rRNA in bridges B5 and B8.

In terms of biological role, binds to 23S rRNA. Forms part of two intersubunit bridges in the 70S ribosome. In Desulfovibrio desulfuricans (strain ATCC 27774 / DSM 6949 / MB), this protein is Large ribosomal subunit protein uL14.